The following is a 193-amino-acid chain: Transcriptional activator GvpE2 (193 aa).

Residue 143 to 148 coordinates DNA; it reads KRKVYR. The interval 153 to 184 is leucine-zipper; sequence QAAIEHVDSVVLQLLTFAVGLQTIMADCIVNQ.

Homodimer. Interacts with endogenous GvpD, also with GvpD from H.mediterranei.

It localises to the cytoplasm. With respect to regulation, degraded once GvpD is translated; degradation requires 'Arg-494' of GvpD; tested in transgenic H.volcanii. Fusion of green fluorescent protein to its C-terminus partially protects it from degradation. In terms of biological role, plays a regulatory role in gas vesicle synthesis, required to activate transcription of the c-gvpA operon. Gas vesicles are hollow, gas filled proteinaceous nanostructures found in several microbial planktonic microorganisms. They allow positioning of halobacteria at the optimal depth for growth in the poorly aerated, shallow brine pools of their habitat. Functionally, expression of 2 c-vac DNA fragments containing 2 divergently transcribed regions (gvpE-gvpF-gvpG-gvpH-gvpI-gvpJ-gvpK-gvpL-gvpM and gvpA-gvpC-gvpN-gvpO) allows H.volcanii to produce gas vesicles. All site-directed mutagenesis is tested in H.volcanii. This chain is Transcriptional activator GvpE2, found in Halobacterium salinarum (strain ATCC 700922 / JCM 11081 / NRC-1) (Halobacterium halobium).